The chain runs to 101 residues: Large ribosomal subunit protein uL23 (101 aa).

The protein belongs to the universal ribosomal protein uL23 family. Part of the 50S ribosomal subunit. Contacts protein L29, and trigger factor when it is bound to the ribosome.

One of the early assembly proteins it binds 23S rRNA. One of the proteins that surrounds the polypeptide exit tunnel on the outside of the ribosome. Forms the main docking site for trigger factor binding to the ribosome. This chain is Large ribosomal subunit protein uL23, found in Synechocystis sp. (strain ATCC 27184 / PCC 6803 / Kazusa).